The following is a 290-amino-acid chain: Glycine--tRNA ligase alpha subunit (290 aa).

This sequence belongs to the class-II aminoacyl-tRNA synthetase family. As to quaternary structure, tetramer of two alpha and two beta subunits.

It is found in the cytoplasm. The catalysed reaction is tRNA(Gly) + glycine + ATP = glycyl-tRNA(Gly) + AMP + diphosphate. The chain is Glycine--tRNA ligase alpha subunit from Maridesulfovibrio salexigens (strain ATCC 14822 / DSM 2638 / NCIMB 8403 / VKM B-1763) (Desulfovibrio salexigens).